A 257-amino-acid polypeptide reads, in one-letter code: uncharacterized protein (257 aa).

This is an uncharacterized protein from Dictyostelium discoideum (Social amoeba).